A 105-amino-acid polypeptide reads, in one-letter code: Insulin-like peptide 7 (105 aa).

The signal sequence occupies residues 1 to 18; that stretch reads MPPIILVFFLVLIPASQQ. A propeptide spanning residues 19-57 is cleaved from the precursor; sequence YPFSLESLNDQIINEEVIEYMLENSIRSSRTRRVPDEKK. 4 disulfides stabilise this stretch: C61-C90, C73-C103, C77-C104, and C89-C94.

Belongs to the insulin family.

The protein resides in the secreted. Its function is as follows. Insulin-like peptide which plays a role in ageing as a consequence of daf-16 activity. The protein is Insulin-like peptide 7 of Caenorhabditis elegans.